Reading from the N-terminus, the 1342-residue chain is Putative aldehyde oxidase-like protein (1342 aa).

The disordered stretch occupies residues 1 to 23 (MSDCNSGGGERRPNARATDAPPV). Positions 221-408 (ISSPREGWYC…LSIFIPHWAS (188 aa)) constitute an FAD-binding PCMH-type domain.

This sequence belongs to the xanthine dehydrogenase family.

The sequence is that of Putative aldehyde oxidase-like protein from Oryza sativa subsp. japonica (Rice).